The following is a 453-amino-acid chain: Cholesterol 7-desaturase nvd (453 aa).

A helical transmembrane segment spans residues 53 to 73; that stretch reads IVEYILILTLMFAFSAILYVI. The region spanning 126 to 229 is the Rieske domain; sequence WFAVAETREL…VVETDGAIWI (104 aa). Residues Cys167, His169, Cys187, and His190 each contribute to the [2Fe-2S] cluster site.

The protein belongs to the cholesterol 7-desaturase family. Requires [2Fe-2S] cluster as cofactor.

It localises to the membrane. The enzyme catalyses cholesterol + NADPH + O2 + H(+) = 7-dehydrocholesterol + NADP(+) + 2 H2O. It carries out the reaction cholesterol + NADH + O2 + H(+) = 7-dehydrocholesterol + NAD(+) + 2 H2O. It participates in steroid hormone biosynthesis; dafachronic acid biosynthesis. In terms of biological role, catalyzes the production of 7-dehydrocholesterol (7-DHC or cholesta-5,7-dien-3beta-ol) by inserting a double bond (desaturating) at the C7-C8 single bond of cholesterol. Essential regulator of steroid biosynthesis as this reaction is the first step in the synthesis of the steroid hormone Delta(7)-dafachronic acid. This is Cholesterol 7-desaturase nvd from Bombyx mori (Silk moth).